The following is a 141-amino-acid chain: Hemoglobin subunit alpha (141 aa).

Residues 1–141 (VLSGEDKNNI…VSTVLTSKYR (141 aa)) form the Globin domain. Position 3 is a phosphoserine (serine 3). N6-succinyllysine is present on residues lysine 7 and lysine 11. Lysine 16 bears the N6-acetyllysine; alternate mark. Position 16 is an N6-succinyllysine; alternate (lysine 16). Tyrosine 24 carries the post-translational modification Phosphotyrosine. Lysine 40 carries the N6-succinyllysine modification. Serine 49 is subject to Phosphoserine. Residue histidine 58 participates in O2 binding. Residue histidine 87 coordinates heme b. Position 102 is a phosphoserine (serine 102). Residue threonine 108 is modified to Phosphothreonine. Serine 124 and serine 131 each carry phosphoserine. Phosphothreonine is present on residues threonine 134 and threonine 137. A Phosphoserine modification is found at serine 138.

This sequence belongs to the globin family. In terms of assembly, heterotetramer of two alpha chains and two beta chains. As to expression, red blood cells.

Involved in oxygen transport from the lung to the various peripheral tissues. In terms of biological role, hemopressin acts as an antagonist peptide of the cannabinoid receptor CNR1. Hemopressin-binding efficiently blocks cannabinoid receptor CNR1 and subsequent signaling. The sequence is that of Hemoglobin subunit alpha (HBA) from Ondatra zibethicus (Muskrat).